A 261-amino-acid chain; its full sequence is Carnitinyl-CoA dehydratase (261 aa).

Glutamate 111 acts as the Nucleophile in catalysis. Glutamate 131 (proton acceptor) is an active-site residue.

It belongs to the enoyl-CoA hydratase/isomerase family.

The catalysed reaction is (R)-carnitinyl-CoA = crotonobetainyl-CoA + H2O. The protein operates within amine and polyamine metabolism; carnitine metabolism. In terms of biological role, catalyzes the reversible dehydration of L-carnitinyl-CoA to crotonobetainyl-CoA. The chain is Carnitinyl-CoA dehydratase from Escherichia coli (strain SMS-3-5 / SECEC).